The following is a 559-amino-acid chain: Oxygen-dependent choline dehydrogenase (559 aa).

4 to 33 (DYIIIGAGSAGNVLATRLTEESDVSVLLLE) is an FAD binding site. The tract at residues 182-201 (EGFGPMDRTVTPKGRRASTA) is disordered. The Proton acceptor role is filled by histidine 471.

It belongs to the GMC oxidoreductase family. FAD serves as cofactor.

The enzyme catalyses choline + A = betaine aldehyde + AH2. The catalysed reaction is betaine aldehyde + NAD(+) + H2O = glycine betaine + NADH + 2 H(+). It participates in amine and polyamine biosynthesis; betaine biosynthesis via choline pathway; betaine aldehyde from choline (cytochrome c reductase route): step 1/1. Involved in the biosynthesis of the osmoprotectant glycine betaine. Catalyzes the oxidation of choline to betaine aldehyde and betaine aldehyde to glycine betaine at the same rate. The protein is Oxygen-dependent choline dehydrogenase of Pectobacterium carotovorum subsp. carotovorum (strain PC1).